The sequence spans 384 residues: Heparin lyase I (384 aa).

The first 21 residues, 1–21 (MKKQILYLIVLQQLFLCSAYA), serve as a signal peptide directing secretion. Glutamine 22 carries the blocked amino end (Gln) modification. Serine 39 carries an O-linked (Man...) serine glycan.

As to quaternary structure, monomer. The N-terminus is blocked.

It localises to the periplasm. It carries out the reaction Eliminative cleavage of polysaccharides containing (1-&gt;4)-linked D-glucuronate or L-iduronate residues and (1-&gt;4)-alpha-linked 2-sulfoamino-2-deoxy-6-sulfo-D-glucose residues to give oligosaccharides with terminal 4-deoxy-alpha-D-gluc-4-enuronosyl groups at their non-reducing ends.. Degrades heparin and heparan sulfate. Also implicated in the release of heparin-bound growth factors from the extracellular matrix. The sequence is that of Heparin lyase I from Pedobacter heparinus (Flavobacterium heparinum).